We begin with the raw amino-acid sequence, 595 residues long: Actin-histidine N-methyltransferase (595 aa).

A disordered region spans residues 1–22 (MGKKSRVKTQKSGTGATATVSP). Over residues 10 to 20 (QKSGTGATATV) the composition is skewed to polar residues. Residues Arg75, 104–106 (EGF), Arg254, 275–279 (DMCNH), and 325–327 (SGF) each bind S-adenosyl-L-methionine. The SET domain occupies 94-314 (EGFEMVNFKE…AGEQIYIFYG (221 aa)). The residue at position 513 (Ser513) is a Phosphoserine. Residues 549 to 572 (ENGLVNGENSVPNGTRSENENLNQ) show a composition bias toward polar residues. A disordered region spans residues 549-595 (ENGLVNGENSVPNGTRSENENLNQEESKRAVEDAKGSSSDNTAEVKE). A compositionally biased stretch (basic and acidic residues) spans 573–583 (EESKRAVEDAK). A compositionally biased stretch (polar residues) spans 584–595 (GSSSDNTAEVKE).

The protein belongs to the class V-like SAM-binding methyltransferase superfamily. SETD3 actin-histidine methyltransferase family. As to quaternary structure, interacts with MYOD1. Post-translationally, phosphorylated by GSK3B, which is required for recognition by the SCF(FBXW7) complex and subsequent degradation. Ubiquitinated by the SCF(FBXW7) complex following phosphorylation by GSK3B, leading to its degradation by the proteasome.

The protein resides in the cytoplasm. Its subcellular location is the nucleus. The enzyme catalyses L-histidyl-[protein] + S-adenosyl-L-methionine = N(tele)-methyl-L-histidyl-[protein] + S-adenosyl-L-homocysteine + H(+). Protein-histidine N-methyltransferase that specifically mediates 3-methylhistidine (tele-methylhistidine) methylation of actin at 'His-73'. Histidine methylation of actin is required for smooth muscle contraction of the laboring uterus during delivery. Does not have protein-lysine N-methyltransferase activity and probably only catalyzes histidine methylation of actin. The polypeptide is Actin-histidine N-methyltransferase (Papio anubis (Olive baboon)).